Here is a 253-residue protein sequence, read N- to C-terminus: Protein C1orf43 homolog (253 aa).

The helical transmembrane segment at 11 to 31 threads the bilayer; the sequence is VNVVLVMAYGSLVFVLLFIFV.

Its subcellular location is the membrane. The protein localises to the golgi apparatus. It localises to the mitochondrion. In terms of biological role, general regulator of phagocytosis. Required to uptake Gram negative bacterium by macrophages. This is Protein C1orf43 homolog from Mus musculus (Mouse).